Consider the following 164-residue polypeptide: Phosphopantetheine adenylyltransferase (164 aa).

Residue Ser9 participates in substrate binding. ATP-binding positions include 9–10 (SF) and His17. Lys41, Val78, and Arg92 together coordinate substrate. ATP is bound by residues 93-95 (GLR), Glu103, and 128-134 (VRTITAT).

Belongs to the bacterial CoaD family. Homohexamer. It depends on Mg(2+) as a cofactor.

The protein localises to the cytoplasm. The enzyme catalyses (R)-4'-phosphopantetheine + ATP + H(+) = 3'-dephospho-CoA + diphosphate. The protein operates within cofactor biosynthesis; coenzyme A biosynthesis; CoA from (R)-pantothenate: step 4/5. In terms of biological role, reversibly transfers an adenylyl group from ATP to 4'-phosphopantetheine, yielding dephospho-CoA (dPCoA) and pyrophosphate. This Brucella suis (strain ATCC 23445 / NCTC 10510) protein is Phosphopantetheine adenylyltransferase.